The following is a 920-amino-acid chain: Dynamin-2B (920 aa).

Residue Met1 is modified to N-acetylmethionine. The 269-residue stretch at 35–303 (PATSLNVVAL…IRSRMKLRLP (269 aa)) folds into the Dynamin-type G domain. Positions 45 to 52 (GNVGAGKS) are G1 motif. 45–53 (GNVGAGKSA) lines the GTP pocket. The G2 motif stretch occupies residues 71 to 73 (ATR). Positions 143 to 146 (DLPG) are G3 motif. The interval 204–207 (SKID) is G4 motif. 204 to 210 (SKIDQAA) lines the GTP pocket. Residues 238–241 (ALIG) are G5 motif. A GTP-binding site is contributed by 246–249 (IASA). The span at 507–522 (RREEELKGRSSKKGQD) shows a compositional bias: basic and acidic residues. 2 disordered regions span residues 507–577 (RREE…TAGP) and 632–657 (IEEI…PDSK). The span at 523–545 (AEQSLLNRATSPQPDGPSSTGGS) shows a compositional bias: polar residues. Composition is skewed to basic and acidic residues over residues 548 to 567 (SLRD…KETP) and 641 to 652 (EKSKSSKDKKSN). Residues 579–703 (GEITAGYLMK…WINKLQKVIQ (125 aa)) enclose the PH domain. In terms of domain architecture, GED spans 737 to 830 (LRWMSQEVRG…QLSIHDNRAA (94 aa)). An important for homodimerization region spans residues 747-761 (YVEAVLNSLAANVPK). Residues 788–812 (NERIESLIQEDQNVKRRRDRYQKQS) adopt a coiled-coil conformation. The disordered stretch occupies residues 828–920 (RAAAASSWSD…PPQSGSSYRY (93 aa)). A compositionally biased stretch (polar residues) spans 833 to 849 (SSWSDNSGTESSPRTNG).

This sequence belongs to the TRAFAC class dynamin-like GTPase superfamily. Dynamin/Fzo/YdjA family. As to quaternary structure, interacts with DRP1A at the plasma membrane and in forming clathrin-coated vesicles (CCV). In terms of tissue distribution, ubiquitous. Preferentially expressed in siliques.

The protein localises to the cytoplasm. It is found in the cytoskeleton. Its subcellular location is the cytoplasmic vesicle. It localises to the clathrin-coated vesicle. The protein resides in the cell membrane. The catalysed reaction is GTP + H2O = GDP + phosphate + H(+). Functionally, putative microtubule-associated force-producing protein, able to bind and hydrolyze GTP. Collaboratively with DRP1A, participates in clathrin-coated vesicle formation during endocytosis. With DRP1A and PIP5K3, required for the precise coordination of polar ARAC3/ROP6 and ARAC4/ROP2 placement and subsequent root hair positioning during planar polarity formation in root hair-forming cells. This is Dynamin-2B from Arabidopsis thaliana (Mouse-ear cress).